We begin with the raw amino-acid sequence, 514 residues long: Polygalacturonase (514 aa).

The signal sequence occupies residues 1–22 (MAMKFIAPMAFVAMQLIIMAAA). A propeptide spanning residues 23 to 45 (EDQSAQIMLDSDIEQYLRSNRSL) is cleaved from the precursor. 5 PbH1 repeats span residues 214–240 (CEGVKIIGISITAPRDSPNTDGIDIFA), 241–262 (SKNFHLQKNTIGTGDDCVAIGT), 264–284 (SSNIVIEDLICGPGHGISIGS), 294–315 (VSYVHVNGAKFIDTQNGLRIKT), and 323–344 (ASHIIYENVEMINSENPILINQ). Asp-255 serves as the catalytic Proton donor. His-278 is an active-site residue. A propeptide spanning residues 434 to 514 (AKRKESKSHK…CSRHGKIYHP (81 aa)) is cleaved from the precursor. N-linked (GlcNAc...) asparagine glycans are attached at residues Asn-460 and Asn-472.

The protein belongs to the glycosyl hydrolase 28 family.

It localises to the secreted. The protein localises to the plastid. Its subcellular location is the amyloplast. The protein resides in the cell wall. The enzyme catalyses (1,4-alpha-D-galacturonosyl)n+m + H2O = (1,4-alpha-D-galacturonosyl)n + (1,4-alpha-D-galacturonosyl)m.. This Cryptomeria japonica (Japanese cedar) protein is Polygalacturonase.